Reading from the N-terminus, the 148-residue chain is HTH-type transcriptional regulator Rv2324 (148 aa).

The HTH asnC-type domain maps to 4–65 (LDDTDERILA…VVDRNALGWN (62 aa)). The segment at residues 23–42 (FAEIGHKVSLSAPAVKRRVD) is a DNA-binding region (H-T-H motif).

In terms of assembly, homodimer. Forms oligomers.

With respect to regulation, the DNA-binding activity of Rv2324 is modulated by interaction of Rv2324 with amino acids. Aspartate is the only effector amino acid that completely abolishes DNA binding. The majority of amino acids induce a dimer-tetramer or dimer-hexamer oligomeric transition. In response to amino-acid binding, adopts an open quaternary association, which is a part of the functional requirement to bind to non-symmetrically distributed target DNA binding sites. In terms of biological role, transcriptional regulator involved in growth, DNA replication and damage control. Plays a crucial role in regulating survival and growth of M.tuberculosis. Could function as a global regulator in both the latent/persistent and active phases of growth. Binds to its own promoter region and to promoters of multiple metabolic genes, such as serB2, lat, ald and roc operon. In vitro, interacts with intrinsically curved and non-curved DNA molecules, and with both supercoiled and linear DNA, with higher affinity for supercoiled DNA. Binds to DNA recombination, replication and repair intermediates. This chain is HTH-type transcriptional regulator Rv2324, found in Mycobacterium tuberculosis (strain ATCC 25618 / H37Rv).